We begin with the raw amino-acid sequence, 463 residues long: uncharacterized protein (463 aa).

12 helical membrane-spanning segments follow: residues 17 to 37 (ISLM…SASA), 40 to 60 (LAGP…FFIM), 97 to 117 (WFLW…YMGF), 122 to 142 (VPNW…NFLA), 153 to 173 (FALI…LMII), 201 to 221 (GVLL…MIGV), 244 to 264 (ILIF…WQEI), 278 to 298 (VGIP…ALSS), 335 to 355 (AVLA…VVPA), 357 to 377 (VFTW…AIIL), 401 to 421 (LFPF…ILMA), and 429 to 449 (AVII…GKGF).

It belongs to the amino acid-polyamine-organocation (APC) superfamily.

The protein resides in the cell membrane. This is an uncharacterized protein from Bacillus subtilis (strain 168).